The primary structure comprises 297 residues: uncharacterized protein (297 aa).

This is an uncharacterized protein from Bacillus subtilis (strain 168).